The following is a 358-amino-acid chain: 3-dehydroquinate synthase (358 aa).

Residues 102-106, 126-127, lysine 139, and lysine 148 each bind NAD(+); these read GVVGD and TT. Zn(2+)-binding residues include glutamate 181, histidine 244, and histidine 260.

It belongs to the sugar phosphate cyclases superfamily. Dehydroquinate synthase family. Requires Co(2+) as cofactor. Zn(2+) serves as cofactor. NAD(+) is required as a cofactor.

It localises to the cytoplasm. The enzyme catalyses 7-phospho-2-dehydro-3-deoxy-D-arabino-heptonate = 3-dehydroquinate + phosphate. The protein operates within metabolic intermediate biosynthesis; chorismate biosynthesis; chorismate from D-erythrose 4-phosphate and phosphoenolpyruvate: step 2/7. Functionally, catalyzes the conversion of 3-deoxy-D-arabino-heptulosonate 7-phosphate (DAHP) to dehydroquinate (DHQ). The protein is 3-dehydroquinate synthase of Symbiobacterium thermophilum (strain DSM 24528 / JCM 14929 / IAM 14863 / T).